The following is a 524-amino-acid chain: Thermosome subunit 3 (524 aa).

Belongs to the TCP-1 chaperonin family. In terms of assembly, the thermosome or CCT complex is a oligomeric complex of two octameric double-ring structures; the complex is probably a heterooligomer of CCT1, CCT2 and CCT3 with yet unknown stoichiometry.

Molecular chaperone that assists in the folding or refolding of nascent or denatured proteins along with ATP hydrolysis. ATPase activity is highest in thermosome assemblies containing CCT1:CCT2, followed by assemblies containing CCT1:CCT2:CCT3. Not required for thermosome ATPase activity. Not required for growth. The polypeptide is Thermosome subunit 3 (cct3) (Haloferax volcanii (strain ATCC 29605 / DSM 3757 / JCM 8879 / NBRC 14742 / NCIMB 2012 / VKM B-1768 / DS2) (Halobacterium volcanii)).